The primary structure comprises 702 residues: Ribosomal RNA large subunit methyltransferase K/L (702 aa).

One can recognise a THUMP domain in the interval 43–154 (LVYQSLMWSR…KETASIALDL (112 aa)).

This sequence belongs to the methyltransferase superfamily. RlmKL family.

Its subcellular location is the cytoplasm. It catalyses the reaction guanosine(2445) in 23S rRNA + S-adenosyl-L-methionine = N(2)-methylguanosine(2445) in 23S rRNA + S-adenosyl-L-homocysteine + H(+). The enzyme catalyses guanosine(2069) in 23S rRNA + S-adenosyl-L-methionine = N(2)-methylguanosine(2069) in 23S rRNA + S-adenosyl-L-homocysteine + H(+). Specifically methylates the guanine in position 2445 (m2G2445) and the guanine in position 2069 (m7G2069) of 23S rRNA. The protein is Ribosomal RNA large subunit methyltransferase K/L of Escherichia coli O139:H28 (strain E24377A / ETEC).